The sequence spans 147 residues: Hemoglobin subunit beta (147 aa).

The region spanning 3-147 (LLSAEENAHV…VANALAHKYH (145 aa)) is the Globin domain. At Thr13 the chain carries Phosphothreonine. Phosphoserine is present on Ser45. Position 60 is an N6-acetyllysine (Lys60). Heme b is bound at residue His64. An N6-acetyllysine modification is found at Lys83. Heme b is bound at residue His93. Position 94 is an S-nitrosocysteine (Cys94). N6-acetyllysine is present on Lys145.

It belongs to the globin family. As to quaternary structure, heterotetramer of two alpha chains and two beta chains. As to expression, red blood cells.

Involved in oxygen transport from the lung to the various peripheral tissues. In Eulemur fulvus fulvus (Brown lemur), this protein is Hemoglobin subunit beta (HBB).